A 138-amino-acid polypeptide reads, in one-letter code: uncharacterized protein (138 aa).

The chain crosses the membrane as a helical span at residues 19–40 (ECKVSVISFFLLAFLLMAHIWL). Repeat copies occupy residues 94–106 (KGEIEGKEEKKEG), 107–119 (KGEIEGKEEKKEG), and 120–132 (KGEIEGKEEKKEV). Residues 94 to 132 (KGEIEGKEEKKEGKGEIEGKEEKKEGKGEIEGKEEKKEV) are 3 X 13 AA tandem repeats of K-G-E-I-E-G-K-E-E-K-K-E-[GV]. A disordered region spans residues 98-138 (EGKEEKKEGKGEIEGKEEKKEGKGEIEGKEEKKEVENGPRK).

As to expression, expressed in roots, leaves and flowers.

It localises to the mitochondrion membrane. In terms of biological role, involved in cytoplasmic male sterility (CMS) by leading to pollen abortion. Not expressed in fertile (normal) plants. This is an uncharacterized protein from Raphanus sativus (Radish).